We begin with the raw amino-acid sequence, 179 residues long: GTP-dependent dephospho-CoA kinase (179 aa).

Residues aspartate 50, valine 51, valine 52, aspartate 69, lysine 71, and glutamate 126 each coordinate GTP.

Belongs to the GTP-dependent DPCK family.

The catalysed reaction is 3'-dephospho-CoA + GTP = GDP + CoA + H(+). It participates in cofactor biosynthesis; coenzyme A biosynthesis. Functionally, catalyzes the GTP-dependent phosphorylation of the 3'-hydroxyl group of dephosphocoenzyme A to form coenzyme A (CoA). This is GTP-dependent dephospho-CoA kinase from Pyrococcus horikoshii (strain ATCC 700860 / DSM 12428 / JCM 9974 / NBRC 100139 / OT-3).